Here is a 690-residue protein sequence, read N- to C-terminus: Protein arginine N-methyltransferase 7 (690 aa).

2 consecutive SAM-dependent MTase PRMT-type domains span residues 14-357 and 366-690; these read QNSW…YSLW and TKSV…QKKL.

Belongs to the class I-like SAM-binding methyltransferase superfamily. Protein arginine N-methyltransferase family. PRMT7 subfamily.

Essential arginine methyltransferase that can both catalyze the formation of omega-N monomethylarginine (MMA) and symmetrical dimethylarginine (sDMA). Specifically mediates the symmetrical dimethylation of arginine residues in the small nuclear ribonucleoproteins SmD1 and SmD3. In Drosophila yakuba (Fruit fly), this protein is Protein arginine N-methyltransferase 7 (Art7).